The sequence spans 262 residues: Glutamate 5-kinase (262 aa).

Lysine 14 is a binding site for ATP. Residues serine 54, aspartate 141, and asparagine 153 each contribute to the substrate site. Residues 173-174 (SD) and 214-220 (TGGMVTK) each bind ATP.

This sequence belongs to the glutamate 5-kinase family.

It localises to the cytoplasm. It catalyses the reaction L-glutamate + ATP = L-glutamyl 5-phosphate + ADP. It participates in amino-acid biosynthesis; L-proline biosynthesis; L-glutamate 5-semialdehyde from L-glutamate: step 1/2. Its function is as follows. Catalyzes the transfer of a phosphate group to glutamate to form L-glutamate 5-phosphate. The polypeptide is Glutamate 5-kinase (Symbiobacterium thermophilum (strain DSM 24528 / JCM 14929 / IAM 14863 / T)).